We begin with the raw amino-acid sequence, 235 residues long: Orotidine 5'-phosphate decarboxylase (235 aa).

Substrate-binding positions include Asp-12, Lys-34, 61-70 (DLKFHDIPNT), Thr-121, Arg-182, Gln-191, Gly-211, and Arg-212. Lys-63 serves as the catalytic Proton donor.

Belongs to the OMP decarboxylase family. Type 1 subfamily. Homodimer.

It catalyses the reaction orotidine 5'-phosphate + H(+) = UMP + CO2. It participates in pyrimidine metabolism; UMP biosynthesis via de novo pathway; UMP from orotate: step 2/2. Functionally, catalyzes the decarboxylation of orotidine 5'-monophosphate (OMP) to uridine 5'-monophosphate (UMP). The protein is Orotidine 5'-phosphate decarboxylase of Marinomonas sp. (strain MWYL1).